A 97-amino-acid polypeptide reads, in one-letter code: ESAT-6-like protein EsxG (97 aa).

Ser2 bears the N-acetylserine mark.

Belongs to the WXG100 family. CFP-10 subfamily. Forms a tight 1:1 complex with EsxH.

It is found in the secreted. In terms of biological role, esxG, in complex with EsxH, disrupts ESCRT function and impairs host phagosome maturation, thereby promoting intracellular bacterial growth. The complex acts by interacting, via EsxH, with the host hepatocyte growth factor-regulated tyrosine kinase substrate (HGS/HRS), a component of the ESCRT machinery. EsxG stabilizes EsxH in the host cytosol. The protein is ESAT-6-like protein EsxG of Mycobacterium tuberculosis (strain ATCC 25618 / H37Rv).